Consider the following 473-residue polypeptide: Photosystem II CP43 reaction center protein (473 aa).

The propeptide occupies 1-14 (MKTLYSLRRFYPVE). Residue Thr-15 is modified to N-acetylthreonine. A Phosphothreonine modification is found at Thr-15. Helical transmembrane passes span 69–93 (LFEV…PHLA), 134–155 (LLGP…KDRN), 178–200 (KALY…RKIT), 255–275 (KPFA…LSYS), and 291–312 (WFNN…ASQA). Glu-367 contacts [CaMn4O5] cluster. A helical membrane pass occupies residues 447 to 471 (RARAAAAGFEKGIDRDFEPVLSMTP).

The protein belongs to the PsbB/PsbC family. PsbC subfamily. PSII is composed of 1 copy each of membrane proteins PsbA, PsbB, PsbC, PsbD, PsbE, PsbF, PsbH, PsbI, PsbJ, PsbK, PsbL, PsbM, PsbT, PsbX, PsbY, PsbZ, Psb30/Ycf12, at least 3 peripheral proteins of the oxygen-evolving complex and a large number of cofactors. It forms dimeric complexes. It depends on Binds multiple chlorophylls and provides some of the ligands for the Ca-4Mn-5O cluster of the oxygen-evolving complex. It may also provide a ligand for a Cl- that is required for oxygen evolution. PSII binds additional chlorophylls, carotenoids and specific lipids. as a cofactor.

The protein localises to the plastid. The protein resides in the chloroplast thylakoid membrane. Its function is as follows. One of the components of the core complex of photosystem II (PSII). It binds chlorophyll and helps catalyze the primary light-induced photochemical processes of PSII. PSII is a light-driven water:plastoquinone oxidoreductase, using light energy to abstract electrons from H(2)O, generating O(2) and a proton gradient subsequently used for ATP formation. This is Photosystem II CP43 reaction center protein from Calycanthus floridus var. glaucus (Eastern sweetshrub).